We begin with the raw amino-acid sequence, 200 residues long: Imidazole glycerol phosphate synthase subunit HisH (200 aa).

A Glutamine amidotransferase type-1 domain is found at 3–200; that stretch reads EVALIDAGGA…LRNFLEMDAA (198 aa). Catalysis depends on C78, which acts as the Nucleophile. Catalysis depends on residues H179 and E181.

Heterodimer of HisH and HisF.

The protein resides in the cytoplasm. It carries out the reaction 5-[(5-phospho-1-deoxy-D-ribulos-1-ylimino)methylamino]-1-(5-phospho-beta-D-ribosyl)imidazole-4-carboxamide + L-glutamine = D-erythro-1-(imidazol-4-yl)glycerol 3-phosphate + 5-amino-1-(5-phospho-beta-D-ribosyl)imidazole-4-carboxamide + L-glutamate + H(+). It catalyses the reaction L-glutamine + H2O = L-glutamate + NH4(+). It functions in the pathway amino-acid biosynthesis; L-histidine biosynthesis; L-histidine from 5-phospho-alpha-D-ribose 1-diphosphate: step 5/9. IGPS catalyzes the conversion of PRFAR and glutamine to IGP, AICAR and glutamate. The HisH subunit catalyzes the hydrolysis of glutamine to glutamate and ammonia as part of the synthesis of IGP and AICAR. The resulting ammonia molecule is channeled to the active site of HisF. This is Imidazole glycerol phosphate synthase subunit HisH from Xylella fastidiosa (strain Temecula1 / ATCC 700964).